We begin with the raw amino-acid sequence, 157 residues long: SsrA-binding protein (157 aa).

This sequence belongs to the SmpB family.

It localises to the cytoplasm. Required for rescue of stalled ribosomes mediated by trans-translation. Binds to transfer-messenger RNA (tmRNA), required for stable association of tmRNA with ribosomes. tmRNA and SmpB together mimic tRNA shape, replacing the anticodon stem-loop with SmpB. tmRNA is encoded by the ssrA gene; the 2 termini fold to resemble tRNA(Ala) and it encodes a 'tag peptide', a short internal open reading frame. During trans-translation Ala-aminoacylated tmRNA acts like a tRNA, entering the A-site of stalled ribosomes, displacing the stalled mRNA. The ribosome then switches to translate the ORF on the tmRNA; the nascent peptide is terminated with the 'tag peptide' encoded by the tmRNA and targeted for degradation. The ribosome is freed to recommence translation, which seems to be the essential function of trans-translation. This Limosilactobacillus fermentum (strain NBRC 3956 / LMG 18251) (Lactobacillus fermentum) protein is SsrA-binding protein.